A 636-amino-acid polypeptide reads, in one-letter code: Leucine-rich repeat and fibronectin type-III domain-containing protein 4 (636 aa).

Residues 1 to 16 (MAPPLLLLLLASGAAA) form the signal peptide. In terms of domain architecture, LRRNT spans 17 to 48 (CPLPCVCQNLSESLSTLCAHRGLLFVPPNVDR). Residues 17–518 (CPLPCVCQNL…LQAHVLGGTL (502 aa)) lie on the Extracellular side of the membrane. Asparagine 25 is a glycosylation site (N-linked (GlcNAc...) asparagine). 7 LRR repeats span residues 49–70 (RTVE…DFRN), 73–94 (GLVD…SFGD), 97–118 (SLRS…SLRG), 121–142 (NLQH…AFDD), 146–169 (SLED…GSMP), 170–191 (ALHT…VFAQ), and 194–215 (QLSR…PLFS). The LRRCT domain occupies 234–280 (NPLHCNCELLWLRRLARPDDLETCASPPTLAGRYFWAVPEGEFSCEP). The Ig-like domain maps to 281 to 367 (PLIARHTQRL…GEATARVELR (87 aa)). A disulfide bond links cysteine 302 and cysteine 351. A glycan (N-linked (GlcNAc...) asparagine) is linked at asparagine 333. The Fibronectin type-III domain maps to 405-502 (SEPAVQVTEV…GCAHFSTLPA (98 aa)). Residues 519-539 (TVAVGGVLVAALLVFTVALLV) traverse the membrane as a helical segment. Topologically, residues 540 to 636 (RGRGAGNGRL…SAERLEESVV (97 aa)) are cytoplasmic. A disordered region spans residues 556-585 (VQSQTNGGTSPMPKSHPPRSPPPRPQRSCS). Pro residues predominate over residues 569 to 580 (KSHPPRSPPPRP). Phosphoserine is present on residues serine 585 and serine 627. The short motif at 633 to 636 (ESVV) is the PDZ-binding element.

The protein belongs to the LRFN family. In terms of assembly, forms heteromeric complexes with LRFN1 and LRFN2. Can form heteromeric complexes with LRFN3 and LRFN5. Unable to form homophilic interactions across cell junctions. Interacts with DLG1, DLG2, DLG3 and DLG4. Glycosylated.

It localises to the membrane. Functionally, promotes neurite outgrowth in hippocampal neurons. May play a role in redistributing DLG4 to the cell periphery. The sequence is that of Leucine-rich repeat and fibronectin type-III domain-containing protein 4 (Lrfn4) from Rattus norvegicus (Rat).